A 135-amino-acid chain; its full sequence is Large ribosomal subunit protein bL12c (135 aa).

It belongs to the bacterial ribosomal protein bL12 family. As to quaternary structure, homodimer. Part of the ribosomal stalk of the 50S ribosomal subunit. Forms a multimeric L10(L12)X complex, where L10 forms an elongated spine to which 2 to 4 L12 dimers bind in a sequential fashion. Binds GTP-bound translation factors.

The protein resides in the plastid. Its subcellular location is the chloroplast. In terms of biological role, forms part of the ribosomal stalk which helps the ribosome interact with GTP-bound translation factors. Is thus essential for accurate translation. The chain is Large ribosomal subunit protein bL12c from Chara vulgaris (Common stonewort).